A 373-amino-acid chain; its full sequence is G protein-coupled receptor 137Ba (373 aa).

Topologically, residues 1-15 are lumenal; sequence MQKDSLPTLSPAVPP. A helical membrane pass occupies residues 16–36; that stretch reads YVMLGLTVAYTIFYCLLFVFV. Residues 37–55 lie on the Cytoplasmic side of the membrane; the sequence is YVQLWLVLRYRHKRFSYQT. The chain crosses the membrane as a helical span at residues 56 to 76; it reads VFLFLCLLWAALRALLFSFYF. Over 77–84 the chain is Lumenal; it reads KNCVTANT. A helical transmembrane segment spans residues 85–105; that stretch reads LGPFCFWLLYCFPVCLQFFTL. The Cytoplasmic portion of the chain corresponds to 106 to 135; the sequence is SLMNLYFAQVIFKAKSKYSPELQKYRLPLY. Residues 136–156 traverse the membrane as a helical segment; sequence LLFLSISLLFLLVNLTCALLV. Topologically, residues 157-176 are lumenal; it reads KINRANTETVVLVRVTVNDS. The chain crosses the membrane as a helical span at residues 177–197; that stretch reads LFVLCAVSLSLCLYRIAKMSL. The Cytoplasmic segment spans residues 198 to 213; it reads ANIYLEAKGTSVCQVT. Residues 214 to 234 form a helical membrane-spanning segment; the sequence is LIGVTVVLLYSSRACYNLVVL. Residues 235–268 are Lumenal-facing; sequence ALTKIKSINSFDYDWYNVSDQADLKSTLGDAGYV. A helical membrane pass occupies residues 269–289; it reads VFGVILFVWELLPTSLVVYFF. Topologically, residues 290 to 373 are cytoplasmic; that stretch reads RVRKPTLDRS…HLAPEELNPY (84 aa).

This sequence belongs to the GPR137 family.

It localises to the lysosome membrane. Its function is as follows. Lysosomal integral membrane protein that regulates the localization and activity of mTORC1, a signaling complex promoting cell growth in response to growth factors, energy levels, and amino acids. Interacts with Rag GTPases and increases the lysosomial localization and activity of Rag GTPases and thereby regulates mTORC1 translocation and activity in lysosome. Also acts as a negative regulator of osteoclast activity. May be involved in interleukin-4-induced M2 macrophage polarization. In terms of biological role, also acts as a negative regulator of osteoclast activity. May be involved in interleukin-4-induced M2 macrophage polarization. The protein is G protein-coupled receptor 137Ba of Danio rerio (Zebrafish).